The primary structure comprises 449 residues: G-protein coupled receptor 61 (449 aa).

Residues 1–14 (MESSPIPQSSGNSS) are compositionally biased toward low complexity. Positions 1-29 (MESSPIPQSSGNSSTLGRALQTPGPSTAS) are disordered. Topologically, residues 1 to 44 (MESSPIPQSSGNSSTLGRALQTPGPSTASGVPELGLRDVASESV) are extracellular. N-linked (GlcNAc...) asparagine glycosylation occurs at Asn12. A helical membrane pass occupies residues 45-67 (ALFFMLLLDLTAVAGNAAVMAVI). Residues 68–75 (AKTPALRK) lie on the Cytoplasmic side of the membrane. The helical transmembrane segment at 76 to 98 (FVFVFHLCLVDLLAALTLMPLAM) threads the bilayer. The Extracellular segment spans residues 99–112 (LSSSALFDHALFGE). A helical membrane pass occupies residues 113 to 135 (VACRLYLFLSVCFVSLAILSVSA). Over 136-155 (INVERYYYVVHPMRYEVRMT) the chain is Cytoplasmic. The chain crosses the membrane as a helical span at residues 156–178 (LGLVASVLVGVWVKALAMASVPV). At 179-206 (LGRVYWEEGAPSVNPGCSLQWSHSAYCQ) the chain is on the extracellular side. Residues 207 to 229 (LFVVVFAVLYFLLPLILIFVVYC) traverse the membrane as a helical segment. Topologically, residues 230–287 (SMFRVARVAAMQHGPLPTWMETPRQRSESLSSRSTMVTSSGAHQTTPHRTFGGGKAAV) are cytoplasmic. A helical membrane pass occupies residues 288 to 310 (VLLAVGGQFLLCWLPYFSFHLYV). Topologically, residues 311-324 (ALSAQPISAGQVEN) are extracellular. The helical transmembrane segment at 325–344 (VVTWIGYFCFTSNPFFYGCL) threads the bilayer. The Cytoplasmic segment spans residues 345 to 449 (NRQIRGELSK…RPAPSPRLES (105 aa)).

The protein belongs to the G-protein coupled receptor 1 family. Forms heterodimer with MTNR1B. Interacts with ARRB1 and ARRB2 in a spontaneous and agonist-independent manner; leading to the internalization of GPR61 in the endosomal compartment. In terms of tissue distribution, predominantly expressed in the brain and testes, with relatively lower expression observed in the eye, adrenal gland and pituitary gland.

Its subcellular location is the cell membrane. The protein resides in the endosome membrane. Orphan G-protein coupled receptor. Constitutively activates the G(s)-alpha/cAMP signaling pathway. Shows a reciprocal regulatory interaction with the melatonin receptor MTNR1B most likely through receptor heteromerization. May be involved in the regulation of food intake and body weight. This is G-protein coupled receptor 61 (Gpr61) from Mus musculus (Mouse).